We begin with the raw amino-acid sequence, 361 residues long: Deoxyhypusine hydroxylase (361 aa).

4 HEAT-like PBS-type repeats span residues 59 to 85, 94 to 120, 183 to 211, and 216 to 242; these read LKHE…VLEN, VRHE…YMQD, QRYR…GFRD, and FRHE…RLRD. The Fe cation site is built by H61, E62, H96, and E97. H218, E219, H251, and E252 together coordinate Fe cation.

The protein belongs to the deoxyhypusine hydroxylase family. Fe(2+) serves as cofactor.

It is found in the cytoplasm. It localises to the nucleus. It catalyses the reaction [eIF5A protein]-deoxyhypusine + AH2 + O2 = [eIF5A protein]-hypusine + A + H2O. The protein operates within protein modification; eIF5A hypusination. Functionally, catalyzes the hydroxylation of the N(6)-(4-aminobutyl)-L-lysine intermediate to form hypusine, an essential post-translational modification only found in mature eIF-5A factor. The protein is Deoxyhypusine hydroxylase of Cryptococcus neoformans var. neoformans serotype D (strain JEC21 / ATCC MYA-565) (Filobasidiella neoformans).